The chain runs to 82 residues: Small ribosomal subunit protein bS16 (82 aa).

This sequence belongs to the bacterial ribosomal protein bS16 family.

This is Small ribosomal subunit protein bS16 from Aliivibrio fischeri (strain ATCC 700601 / ES114) (Vibrio fischeri).